Consider the following 253-residue polypeptide: Triosephosphate isomerase (253 aa).

9–11 contributes to the substrate binding site; the sequence is NWK. Catalysis depends on His95, which acts as the Electrophile. Glu167 (proton acceptor) is an active-site residue. Residues Gly173, Ser213, and 234-235 contribute to the substrate site; that span reads GG. Ser213 bears the Phosphoserine mark.

It belongs to the triosephosphate isomerase family. In terms of assembly, homodimer.

The protein resides in the cytoplasm. It carries out the reaction D-glyceraldehyde 3-phosphate = dihydroxyacetone phosphate. Its pathway is carbohydrate biosynthesis; gluconeogenesis. The protein operates within carbohydrate degradation; glycolysis; D-glyceraldehyde 3-phosphate from glycerone phosphate: step 1/1. Functionally, involved in the gluconeogenesis. Catalyzes stereospecifically the conversion of dihydroxyacetone phosphate (DHAP) to D-glyceraldehyde-3-phosphate (G3P). The chain is Triosephosphate isomerase from Geobacillus kaustophilus (strain HTA426).